Here is a 300-residue protein sequence, read N- to C-terminus: Ribosomal protein L11 methyltransferase (300 aa).

Residues Thr-147, Gly-168, Asp-190, and Asn-236 each contribute to the S-adenosyl-L-methionine site.

This sequence belongs to the methyltransferase superfamily. PrmA family.

Its subcellular location is the cytoplasm. The enzyme catalyses L-lysyl-[protein] + 3 S-adenosyl-L-methionine = N(6),N(6),N(6)-trimethyl-L-lysyl-[protein] + 3 S-adenosyl-L-homocysteine + 3 H(+). Functionally, methylates ribosomal protein L11. The chain is Ribosomal protein L11 methyltransferase from Leptospira interrogans serogroup Icterohaemorrhagiae serovar Lai (strain 56601).